A 372-amino-acid chain; its full sequence is DNA damage-repair/toleration protein DRT100 (372 aa).

The first 26 residues, 1–26 (MRKLLASPFSSLLAVVFISVISVVRC), serve as a signal peptide directing secretion. 9 LRR repeats span residues 136–158 (SLRI…IGKL), 160–183 (KLAV…TSLI), 184–205 (ELKH…DFGS), 208–230 (MLSR…ISGM), 232–254 (RLAD…MGNM), 256–277 (VLSL…SLLS), 280–302 (GLDV…FGSK), 304–326 (YLVS…LSSA), and 328–350 (FVGH…FPFD).

In terms of biological role, this protein is able to complement bacterial recA mutations, but its native function in the plant is not known. This Arabidopsis thaliana (Mouse-ear cress) protein is DNA damage-repair/toleration protein DRT100 (DRT100).